The chain runs to 206 residues: High-affinity nitrate transporter-activating protein 2.1 (206 aa).

The signal sequence occupies residues 1 to 27 (MARLAGVAALSLVLVLLGAGVPRPAAA). A helical membrane pass occupies residues 180–200 (VAAGVFSTFSIAALAFFFVVE).

It belongs to the NAR2 family. Heterotetramer composed of two NRT2.1, NRT2.2 or NRT2.3 and two NAR2.1. Interacts with NRT2.1, NRT2.2 and isoform 1 of NRT2.3. Expressed in epidermal cells of primary and lateral roots, root-shoot junction zone, vascular tissues of adventitious root primordia, stems and coleoptiles of germinating seeds.

Its subcellular location is the cell membrane. In terms of biological role, acts as a dual component transporter with NTR2.1, NRT2.2 and NRT2.3. Required for high-affinity nitrate transport. Involved in the regulation of NRT2.1, NRT2.2 and NRT2.3 expression, and in both, HATS (high-affinity transport system) and LATS (low-affinity transport system) activities in plant roots. Imports nitrate with high affinity when expressed with NTR2.1, NTR2.2 or NTR2.3 in a heterologous system (Xenopus oocytes). The polypeptide is High-affinity nitrate transporter-activating protein 2.1 (NAR2.1) (Oryza sativa subsp. japonica (Rice)).